We begin with the raw amino-acid sequence, 121 residues long: Met-lysine-1a (121 aa).

Positions 1–22 are cleaved as a signal peptide; it reads MKSFVFALALIVAFACISESKS. Residues 23-69 constitute a propeptide that is removed on maturation; it reads DHTGYEEEENLEDSELTDLVTAALLEELAEASEMDDLSYTEEAGGER. Met-120 is subject to Methionine amide.

As to expression, expressed by the venom gland.

It localises to the secreted. Its function is as follows. Shows no antimicrobial activity against Gram-positive bacterium B.subtilis B-501 or Gram-negative bacterium E.coli DH5-alpha at concentrations up to 20 ug/ml. Shows no toxicity towards insect (S.carnaria) larvae. The protein is Met-lysine-1a of Lachesana tarabaevi (Spider).